The primary structure comprises 260 residues: MVDAIAKIKQDKPFIFNITNEVASNFSANGLIAIGASPAMSHTPREAKKYGEIADAVVLNLGTLTEDRGEAMLKAGMAANKNGVPVILDPIAVGGTDFRTEIIDDILKTVKLAAIRANAGEIAVLAGKLEKAKGPDSIIQENEPEIAKTVAKKYDTVVISTGKVDVVTDGKRTALCTNGHEMLQNITASGCLLSSFVGPFVSVVDDFYQAGIYAVTSYGIAAELAMEKASGPGTFIPALLDEIYFLTDEKVEKYKQVHEL.

Met40 contacts substrate. Residues Arg116 and Thr161 each contribute to the ATP site. Ala188 contributes to the substrate binding site.

This sequence belongs to the Thz kinase family. The cofactor is Mg(2+).

It carries out the reaction 5-(2-hydroxyethyl)-4-methylthiazole + ATP = 4-methyl-5-(2-phosphooxyethyl)-thiazole + ADP + H(+). The protein operates within cofactor biosynthesis; thiamine diphosphate biosynthesis; 4-methyl-5-(2-phosphoethyl)-thiazole from 5-(2-hydroxyethyl)-4-methylthiazole: step 1/1. Catalyzes the phosphorylation of the hydroxyl group of 4-methyl-5-beta-hydroxyethylthiazole (THZ). The chain is Hydroxyethylthiazole kinase 2 from Oceanobacillus iheyensis (strain DSM 14371 / CIP 107618 / JCM 11309 / KCTC 3954 / HTE831).